The chain runs to 248 residues: Type III pantothenate kinase (248 aa).

6–13 (DIGNTETK) provides a ligand contact to ATP. Substrate is bound at residue 103–106 (GSDR). Aspartate 105 serves as the catalytic Proton acceptor. Aspartate 124 contributes to the K(+) binding site. Residue threonine 127 participates in ATP binding. Residue threonine 178 coordinates substrate.

This sequence belongs to the type III pantothenate kinase family. As to quaternary structure, homodimer. The cofactor is NH4(+). K(+) serves as cofactor.

It is found in the cytoplasm. It carries out the reaction (R)-pantothenate + ATP = (R)-4'-phosphopantothenate + ADP + H(+). The protein operates within cofactor biosynthesis; coenzyme A biosynthesis; CoA from (R)-pantothenate: step 1/5. Functionally, catalyzes the phosphorylation of pantothenate (Pan), the first step in CoA biosynthesis. This chain is Type III pantothenate kinase, found in Pelagibacter ubique (strain HTCC1062).